The chain runs to 396 residues: Phosphoglycerate kinase (396 aa).

Residues 21 to 23, Arg36, 59 to 62, Arg119, and Arg156 each bind substrate; these read DFN and HLGR. ATP contacts are provided by residues Lys207, Glu325, and 352-355; that span reads GGDS.

It belongs to the phosphoglycerate kinase family. Monomer.

It is found in the cytoplasm. It carries out the reaction (2R)-3-phosphoglycerate + ATP = (2R)-3-phospho-glyceroyl phosphate + ADP. Its pathway is carbohydrate degradation; glycolysis; pyruvate from D-glyceraldehyde 3-phosphate: step 2/5. This Lacticaseibacillus casei (strain BL23) (Lactobacillus casei) protein is Phosphoglycerate kinase.